Consider the following 468-residue polypeptide: Effector protein hopD2 (468 aa).

The span at 1 to 20 (MNPLQPIQHSITNSQMSGGQ) shows a compositional bias: polar residues. Residues 1-35 (MNPLQPIQHSITNSQMSGGQQLEAEGSQAHNSYSH) form a disordered region. Positions 143-468 (DASSPPSAND…TQWRAKIALE (326 aa)) constitute a Tyrosine-protein phosphatase domain. C378 acts as the Phosphocysteine intermediate in catalysis.

As to quaternary structure, interacts with EFR and FLS2 (via the kinase and cytoplasmic domains).

It localises to the secreted. It catalyses the reaction O-phospho-L-tyrosyl-[protein] + H2O = L-tyrosyl-[protein] + phosphate. With respect to regulation, inhibited by sodium orthovanadate. In terms of biological role, effector showing tyrosine-phosphatase activity required for host defense suppression. Functions inside plant cells causing suppression of HR (hypersensitive response), PR1 gene expression and oxidative burst probably by interfering with a MAPK (mitogen-activated protein kinase) pathway. MAPK cascades are known to activate defense-related transcription factors. Inhibits plant pattern-recognition receptors (PRRs) activation. This is Effector protein hopD2 (hopD2) from Pseudomonas syringae pv. tomato (strain ATCC BAA-871 / DC3000).